Here is a 740-residue protein sequence, read N- to C-terminus: Elongation factor 2 (740 aa).

The tr-type G domain maps to 23-264 (AQIRNAGTLA…MIIEHVPPPN (242 aa)). Residues 32–39 (AHVDHGKT), 98–102 (DTPGH), and 152–155 (NKID) each bind GTP. H605 is subject to Diphthamide.

The protein belongs to the TRAFAC class translation factor GTPase superfamily. Classic translation factor GTPase family. EF-G/EF-2 subfamily.

It localises to the cytoplasm. In terms of biological role, catalyzes the GTP-dependent ribosomal translocation step during translation elongation. During this step, the ribosome changes from the pre-translocational (PRE) to the post-translocational (POST) state as the newly formed A-site-bound peptidyl-tRNA and P-site-bound deacylated tRNA move to the P and E sites, respectively. Catalyzes the coordinated movement of the two tRNA molecules, the mRNA and conformational changes in the ribosome. The protein is Elongation factor 2 of Pyrobaculum neutrophilum (strain DSM 2338 / JCM 9278 / NBRC 100436 / V24Sta) (Thermoproteus neutrophilus).